We begin with the raw amino-acid sequence, 85 residues long: Phycobilisome 9.7 kDa linker polypeptide, phycocyanin-associated, rod (85 aa).

One can recognise a CpcD-like domain in the interval 16–74 (NRVFVYEVEGLRQNEQTDNNRYQIRNSSTIEIQVPYSRMNEEDRRITRLGGRIVNIRPA).

It belongs to the phycobilisome linker protein family.

It is found in the cellular thylakoid membrane. In terms of biological role, rod linker protein, associated with phycocyanin. Linker polypeptides determine the state of aggregation and the location of the disk-shaped phycobiliprotein units within the phycobilisome and modulate their spectroscopic properties in order to mediate a directed and optimal energy transfer. This is Phycobilisome 9.7 kDa linker polypeptide, phycocyanin-associated, rod (cpcD2) from Microchaete diplosiphon (Fremyella diplosiphon).